The sequence spans 180 residues: Ribulose bisphosphate carboxylase small subunit, chloroplastic 2 (180 aa).

Residues M1–Q56 constitute a chloroplast transit peptide.

Belongs to the RuBisCO small chain family. Heterohexadecamer of 8 large and 8 small subunits.

The protein localises to the plastid. It is found in the chloroplast. In terms of biological role, ruBisCO catalyzes two reactions: the carboxylation of D-ribulose 1,5-bisphosphate, the primary event in carbon dioxide fixation, as well as the oxidative fragmentation of the pentose substrate. Both reactions occur simultaneously and in competition at the same active site. Although the small subunit is not catalytic it is essential for maximal activity. The chain is Ribulose bisphosphate carboxylase small subunit, chloroplastic 2 from Spinacia oleracea (Spinach).